The chain runs to 1002 residues: Transposase for transposon gamma-delta (1002 aa).

Belongs to the transposase 7 family.

In terms of biological role, required for transposition of transposon Tn1000. In Escherichia coli (strain K12), this protein is Transposase for transposon gamma-delta (tnpA).